We begin with the raw amino-acid sequence, 267 residues long: MRTTSPYSHCSHVEMNAGAFVTMLLVALSVCVAAAVDPDVIQPFPQPKPTTIAQKAAVKYKPLLYTSMVVCVPYAAVDAAGRVTDGLKGRHGNDGCTYARHGSQVYGRVEPYGNLSAIMYAWYFPKRFWLGFPIQRHDWKSVVVWIDNLESKVSAIVAVSMAKSDTKYNTETELDANDFARLQVDNQIVISNTSLRFEFFEFGLRSSYLRLTGYNGQYQNLIMWDQLTDAAREALNDDNNFGSAVVPLSDKQFKAHVKEAYPSKSVR.

Positions 1-35 are cleaved as a signal peptide; the sequence is MRTTSPYSHCSHVEMNAGAFVTMLLVALSVCVAAA. N114 carries an N-linked (GlcNAc...) asparagine glycan. Residues 117 to 127 carry the Conserved undecapeptide motif motif; sequence AIMYAWYFPKR. The Conserved heptapeptide motif motif lies at 134-140; sequence IQRHDWK. An N-linked (GlcNAc...) asparagine glycan is attached at N192.

It belongs to the Necrosis inducing protein (NPP1) family.

It localises to the secreted. Its function is as follows. Probable secreted effector that may act as a pathogen-associated molecular pattern (PAMP) recognized by the plant immune system. The sequence is that of NLP effector protein 6 from Plasmopara viticola (Downy mildew of grapevine).